The primary structure comprises 89 residues: MYNYKEVKHMGYGKGYLAMFKNKKVRFKVVNSFPDLKVQFVTSFPDYKVKISNSSSFCEETIKIQVVTSFPDVKLQKVTSFGDFEAYID.

To Synechocystis PCC 6803 slr1025.

This is an uncharacterized protein from Ureaplasma parvum serovar 3 (strain ATCC 700970).